The following is an 87-amino-acid chain: Selenoprotein W (87 aa).

The segment at residues 10–13 (CGAU) is a cross-link (cysteinyl-selenocysteine (Cys-Sec); redox-active). Position 13 (selenocysteine 13) is a non-standard amino acid, selenocysteine. Cysteine 37 is modified (S-glutathionyl cysteine).

The protein belongs to the SelWTH family. Selenoprotein W subfamily. Interacts with DPYSL2, PRDX1, YWHAB, YWHAG, HSP70 and HSP90.

The protein resides in the cytoplasm. Functionally, plays a role as a glutathione (GSH)-dependent antioxidant. May be involved in a redox-related process. May play a role in the myopathies of selenium deficiency. In Sus scrofa (Pig), this protein is Selenoprotein W.